We begin with the raw amino-acid sequence, 463 residues long: Quinolone resistance protein NorB (463 aa).

The next 14 membrane-spanning stretches (helical) occupy residues 17 to 37 (IGIV…VNVV), 53 to 73 (IAVS…GGLA), 86 to 106 (IILN…LLLI), 107 to 127 (IGRL…LSII), 142 to 162 (YWSI…GAVA), 165 to 185 (LGWR…LFLI), 201 to 221 (FDIK…ILIT), 230 to 250 (SLLF…FIVL), 273 to 293 (TASN…NTFV), 299 to 319 (YSSL…LIMI), 334 to 354 (PMLI…LTFL), 357 to 377 (IFYV…LGIY), 403 to 423 (MASA…YAIV), and 435 to 455 (IALW…LLLV).

It belongs to the major facilitator superfamily. TCR/Tet family.

The protein resides in the cell membrane. Its function is as follows. Multidrug efflux pump that acts independently of NorA and is one of the factors that confers resistance against diverse quinolones and chemical compounds. This Staphylococcus aureus (strain COL) protein is Quinolone resistance protein NorB (norB).